The chain runs to 259 residues: L-arginine-binding protein (259 aa).

The first 21 residues, 1–21 (MKKLALLGALALSVLSLPTFA), serve as a signal peptide directing secretion.

It belongs to the bacterial solute-binding protein 3 family.

The protein resides in the periplasm. Its function is as follows. Binds L-arginine with high affinity. Shows no measurable affinity for L-ornithine. In Pseudomonas aeruginosa (strain ATCC 15692 / DSM 22644 / CIP 104116 / JCM 14847 / LMG 12228 / 1C / PRS 101 / PAO1), this protein is L-arginine-binding protein.